A 989-amino-acid polypeptide reads, in one-letter code: MALSTVESFVAQQLELLELERDAEVEERRSWQEHSSLKELQSRGVCLLKLQVSSQCTGLYGQRLVTFEPRKLGPVVVLPSNSFTSGDIVGLYDANESSQLATGVLTRITQKSVTVAFDESHDFQLNLDRENTYRLLKLANDVTYKRLKKALMTLKKYHSGPASSLIDVLLGGSSPSPTTEIPPFTFYNTALDPSQKEAVSFALAQKEVAIIHGPPGTGKTTTVVEIILQAVKQGLKILCCAPSNVAVDNLVERLALCKKRILRLGHPARLLESAQQHSLDAVLARSDNAQIVADIRKDIDQVFGKNKKTQDKREKSNFRNEIKLLRKELKEREEAAIVQSLTAADVVLATNTGASSDGPLKLLPENHFDVVVVDECAQALEASCWIPLLKAPKCILAGDHRQLPPTTISHKAALAGLSRSLMERLVEKHGAGAVRMLTVQYRMHQAITRWASEAMYHGQLTAHPSVAGHLLKDLPGVADTEETSVPLLLIDTAGCGLLELDEEDSQSKGNPGEVRLVTLHIQALVDAGVHAGDIAVIAPYNLQVDLLRQSLSNKHPELEIKSVDGFQGREKEAVILTFVRSNRKGEVGFLAEDRRINVAVTRARRHVAVICDSRTVNNHAFLKTLVDYFTEHGEVRTAFEYLDDIVPENYTHEGSQGHSHAPKPRGPVTSIRKPTNEQENGQEARAAAGQGRRKPNERPPGSQVHSQPSSGARGCDRTGAIDRTEHFRAMIEGFVASKESQLEFPASLSSHDRLLVHQIAEEHGLRHDSTGEGKARHITVSRKSPAGSGGVAPQLPSPPSPAQAEPEPLSQQPLGQPHCSTQLDLKALHLQRLQRQQGSQAQPAKAQPGVGLHPQKTQQKKKKKETKGPALPCEEDFDALVSAVIKADNTCSFAKCTASTTTLGQFCMHCSRRYCLSHHLPEIHGCGEKARAHARQMISREGVLYAGSGTRDRALDPAKRAQLQRRLDKKLGELSSQRTSKRKEKERGT.

A2 carries the post-translational modification N-acetylalanine. Residues 213–220 (GPPGTGKT), Q402, Y441, and E570 each bind ATP. The tract at residues 637 to 783 (TAFEYLDDIV…KARHITVSRK (147 aa)) is SS DNA-binding. 3 disordered regions span residues 650–717 (YTHE…GCDR), 765–818 (LRHD…GQPH), and 833–869 (LQRQQGSQAQPAKAQPGVGLHPQKTQQKKKKKETKGP). A compositionally biased stretch (low complexity) spans 677-690 (EQENGQEARAAAGQ). Residues 721 to 784 (IDRTEHFRAM…ARHITVSRKS (64 aa)) enclose the R3H domain. Residues 765 to 775 (LRHDSTGEGKA) are compositionally biased toward basic and acidic residues. Phosphoserine occurs at positions 797 and 800. Residues 833-842 (LQRQQGSQAQ) show a composition bias toward low complexity. Residues 860–864 (KKKKK) carry the Nuclear localization signal motif. The segment at 885 to 934 (IKADNTCSFAKCTASTTTLGQFCMHCSRRYCLSHHLPEIHGCGEKARAHA) adopts an AN1-type zinc-finger fold. C891, C896, C907, C910, C915, H918, H924, and C926 together coordinate Zn(2+). Residues 954–972 (ALDPAKRAQLQRRLDKKLG) show a composition bias toward basic and acidic residues. Residues 954–989 (ALDPAKRAQLQRRLDKKLGELSSQRTSKRKEKERGT) form a disordered region.

Belongs to the DNA2/NAM7 helicase family. In terms of assembly, homooligomer. Interacts with RUVBL1. Interacts with RUVBL2. Interacts with GTF3C1. Interacts with ABT1. Interacts with ribosomes. In terms of tissue distribution, high expression in brain and testis, moderate in heart, spleen, and kidney, and low in other tissues.

It is found in the nucleus. It localises to the cytoplasm. The protein localises to the cell projection. The protein resides in the axon. The catalysed reaction is ATP + H2O = ADP + phosphate + H(+). 5' to 3' helicase that unwinds RNA and DNA duplexes in an ATP-dependent reaction. Specific to 5'-phosphorylated single-stranded guanine-rich sequences. May play a role in RNA metabolism, ribosome biogenesis or initiation of translation. May play a role in regulation of transcription. Interacts with tRNA-Tyr. This chain is DNA-binding protein SMUBP-2 (IGHMBP2), found in Mesocricetus auratus (Golden hamster).